Consider the following 472-residue polypeptide: Cysteine--tRNA ligase (472 aa).

Cysteine 28 provides a ligand contact to Zn(2+). The 'HIGH' region motif lies at 30–40 (PTVYNYIHIGN). Cysteine 212, histidine 237, and glutamate 241 together coordinate Zn(2+). The 'KMSKS' region motif lies at 271-275 (KMSKS). Lysine 274 contributes to the ATP binding site.

This sequence belongs to the class-I aminoacyl-tRNA synthetase family. As to quaternary structure, monomer. Requires Zn(2+) as cofactor.

It localises to the cytoplasm. The enzyme catalyses tRNA(Cys) + L-cysteine + ATP = L-cysteinyl-tRNA(Cys) + AMP + diphosphate. The polypeptide is Cysteine--tRNA ligase (Limosilactobacillus fermentum (strain NBRC 3956 / LMG 18251) (Lactobacillus fermentum)).